Here is a 459-residue protein sequence, read N- to C-terminus: Ammonium transporter Rh type B (459 aa).

The Cytoplasmic segment spans residues 1-10; that stretch reads MAESTNLRLR. Residues 11–31 traverse the membrane as a helical segment; the sequence is LPLICIILEVILIILFGVLVE. Residues 32–58 lie on the Extracellular side of the membrane; sequence YNDDTDAKKWNKNNSTDPATNEFYYRY. N-linked (GlcNAc...) asparagine glycosylation is present at Asn45. A helical transmembrane segment spans residues 59–79; the sequence is PSFQDVHVMIFVGFGFLMTFL. The Cytoplasmic segment spans residues 80-87; sequence QRYGFSSM. Residues 88-108 form a helical membrane-spanning segment; it reads GFNFLIAAFSLQWATLMQGFF. At 109 to 121 the chain is on the extracellular side; the sequence is HGMHHGKIHVGVT. Residues 122–142 form a helical membrane-spanning segment; sequence SMINADFCTGAVLISFGAVLG. Residues 143–149 are Cytoplasmic-facing; sequence KTSPVQL. A helical transmembrane segment spans residues 150–170; the sequence is LVMAILEVTLFAVNEYILLSI. Residues 171–176 are Extracellular-facing; that stretch reads LGANDA. A helical transmembrane segment spans residues 177-197; the sequence is GGSMTIHTFGAYFGLMVTRIL. Residues 198 to 216 lie on the Cytoplasmic side of the membrane; sequence HRPNLDKSKHKNSSVYHSD. A helical membrane pass occupies residues 217–237; that stretch reads LFAMIGTIFLWMFWPSFNSAI. The Extracellular segment spans residues 238–248; sequence TQYGDPQHRTA. A helical transmembrane segment spans residues 249–269; sequence ANTYYSLAACTLATFGFSSLV. Residues 270-274 are Cytoplasmic-facing; the sequence is NPEGK. The chain crosses the membrane as a helical span at residues 275–295; sequence LDMVHIQNAALAGGVAVGTAG. A topological domain (extracellular) is located at residue Glu296. The helical transmembrane segment at 297–317 threads the bilayer; that stretch reads MMLTPFGSMIVGFLAGTISVL. Residues 318–340 are Cytoplasmic-facing; it reads GYKYLTPFMESKLKIQDTCGIHN. A helical membrane pass occupies residues 341-361; it reads LHGMPGILGAIVGAVTAALAS. The Extracellular portion of the chain corresponds to 362–392; it reads RDVYGNGLDKVFLEAADNSQWSAQTKGGFQA. The helical transmembrane segment at 393 to 413 threads the bilayer; sequence ISLAVTLGIALIGGLITGFLL. At 414-459 the chain is on the cytoplasmic side; sequence KLPIYGTPPDTQCFEDAVYWEVPGEEEDHHELNEVSTQNEVEKLNS. The disordered stretch occupies residues 440–459; it reads EDHHELNEVSTQNEVEKLNS.

This sequence belongs to the ammonium transporter (TC 2.A.49) family. Rh subfamily.

The protein resides in the basolateral cell membrane. The protein localises to the cytoplasmic vesicle membrane. Its function is as follows. Functions as an ammonia transporter. May play a role in the elimination of ammonia in the gill. This Danio rerio (Zebrafish) protein is Ammonium transporter Rh type B (rhbg).